A 190-amino-acid chain; its full sequence is Putative manganese efflux pump MntP (190 aa).

The next 6 helical transmembrane spans lie at 6–26, 36–56, 61–81, 108–128, 138–158, and 169–189; these read IWLL…TSGI, FFIM…IGWF, FSHL…AFWG, LAIA…FVGI, IVII…IGVF, and LWGG…HLFL.

It belongs to the MntP (TC 9.B.29) family.

It localises to the cell inner membrane. Functionally, probably functions as a manganese efflux pump. This chain is Putative manganese efflux pump MntP, found in Phocaeicola vulgatus (strain ATCC 8482 / DSM 1447 / JCM 5826 / CCUG 4940 / NBRC 14291 / NCTC 11154) (Bacteroides vulgatus).